The primary structure comprises 377 residues: Pseudouridylate synthase RPUSD4, mitochondrial (377 aa).

The N-terminal 46 residues, 1-46, are a transit peptide targeting the mitochondrion; the sequence is MAAPCLRTPGVQLLSMSSRPGRLFTPGSWSFCSSATSSRPLNAQRL. The active site involves Asp153.

It belongs to the pseudouridine synthase RluA family. As to quaternary structure, interacts with 16S mt-rRNA, mt-tRNA(Phe) and mt-tRNA(Met). Forms a regulatory protein-RNA complex, consisting of RCC1L, NGRN, RPUSD3, RPUSD4, TRUB2, FASTKD2 and 16S mt-rRNA.

The protein localises to the mitochondrion matrix. It localises to the nucleus. The protein resides in the cytoplasm. The enzyme catalyses uridine in 5S rRNA = pseudouridine in 5S rRNA. The catalysed reaction is a uridine in tRNA = a pseudouridine in tRNA. It catalyses the reaction a uridine in mRNA = a pseudouridine in mRNA. Its function is as follows. Catalyzes uridine to pseudouridine isomerization (pseudouridylation) of different mitochondrial RNA substrates. Acts on position 1397 in 16S mitochondrial ribosomal RNA (16S mt-rRNA). This modification is required for the assembly of 16S mt-rRNA into a functional mitochondrial ribosome. As a component of a functional protein-RNA module, consisting of RCC1L, NGRN, RPUSD3, RPUSD4, TRUB2, FASTKD2 and 16S mt-rRNA, controls 16S mt-rRNA abundance and is required for intra-mitochondrial translation. Acts on position 39 in mitochondrial tRNA(Phe). Also catalyzes pseudouridylation of mRNAs in nucleus: acts as a regulator of pre-mRNA splicing by mediating pseudouridylation of pre-mRNAs at locations associated with alternatively spliced regions. Pseudouridylation of pre-mRNAs near splice sites directly regulates mRNA splicing and mRNA 3'-end processing. In Mus musculus (Mouse), this protein is Pseudouridylate synthase RPUSD4, mitochondrial.